Here is a 174-residue protein sequence, read N- to C-terminus: Shikimate kinase 2 (174 aa).

12 to 17 contributes to the ATP binding site; sequence GCGKTT. Positions 16 and 32 each coordinate Mg(2+). Residues Asp-34, Arg-58, and Gly-79 each contribute to the substrate site. Positions 112-126 are LID domain; that stretch reads QAAPEEDLRPTLTGK. ATP is bound at residue Arg-120. Arg-139 contacts substrate.

Belongs to the shikimate kinase family. AroL subfamily. Monomer. Mg(2+) serves as cofactor.

The protein resides in the cytoplasm. The catalysed reaction is shikimate + ATP = 3-phosphoshikimate + ADP + H(+). The protein operates within metabolic intermediate biosynthesis; chorismate biosynthesis; chorismate from D-erythrose 4-phosphate and phosphoenolpyruvate: step 5/7. Its function is as follows. Catalyzes the specific phosphorylation of the 3-hydroxyl group of shikimic acid using ATP as a cosubstrate. The chain is Shikimate kinase 2 from Escherichia coli O1:K1 / APEC.